The chain runs to 432 residues: Transcriptional adapter 3 (432 aa).

Lys-21 is covalently cross-linked (Glycyl lysine isopeptide (Lys-Gly) (interchain with G-Cter in SUMO2)). The stretch at 40-69 (IEELDTLQLELETLLSSASRRLRVLEAETQ) forms a coiled coil. Residues 87 to 126 (GRDHELGAPPKHGKPKKQKLEGKAGHGPGPGPGRPKSKNL) form a disordered region. Residue Lys-129 forms a Glycyl lysine isopeptide (Lys-Gly) (interchain with G-Cter in SUMO2) linkage. Residues 272–319 (NIISPMEDSPIPDMSGKESGADGASTSPRNQNKPFSVPHTKSLESRIK) form a disordered region. Ser-280 and Ser-298 each carry phosphoserine. Residues 295-305 (ASTSPRNQNKP) show a composition bias toward polar residues. Residues 367 to 407 (LLRLAKEEVSRQELRQRVRMADNEVMDAFRKIMAARQKKRT) are a coiled coil. The residue at position 418 (Lys-418) is an N6-acetyllysine.

The protein belongs to the NGG1 family. The PCAF complex is composed of a number of TBP-associated factors (TAFS), such as TAF5, TAF5L, TAF6, TAF6L, TAF9, TAF10 and TAF12, PCAF, and also PCAF-associated factors (PAFs), such as TADA2L/ADA2, TADA3L/ADA3 and SPT3. Interacts directly with TADA2L and PCAF and also with the high-risk HPV oncoprotein E6. Component of the STAGA transcription coactivator-HAT complex, at least composed of SUPT3H, GCN5L2, TAF5L, TAF6L, SUPT7L, TADA3L, TAD1L, TAF10, TAF12, TRRAP and TAF9. Component of the TFTC-HAT complex. Component of the ADA2A-containing complex (ATAC), composed of KAT14, KAT2A, TADA2L, TADA3L, ZZ3, MBIP, WDR5, YEATS2, CCDC101 and DR1. In terms of tissue distribution, ubiquitously expressed.

The protein resides in the nucleus. Functionally, functions as a component of the PCAF complex. The PCAF complex is capable of efficiently acetylating histones in a nucleosomal context. The PCAF complex could be considered as the human version of the yeast SAGA complex. Also known as a coactivator for p53/TP53-dependent transcriptional activation. Component of the ATAC complex, a complex with histone acetyltransferase activity on histones H3 and H4. The sequence is that of Transcriptional adapter 3 (TADA3) from Homo sapiens (Human).